Reading from the N-terminus, the 212-residue chain is Orotate phosphoribosyltransferase (212 aa).

Residue Lys26 coordinates 5-phospho-alpha-D-ribose 1-diphosphate. An orotate-binding site is contributed by 34–35 (FF). 5-phospho-alpha-D-ribose 1-diphosphate is bound by residues 72–73 (YK), Arg98, Lys99, Lys102, His104, and 123–131 (DDVISAGTS). Residues Ser127 and Arg155 each contribute to the orotate site.

This sequence belongs to the purine/pyrimidine phosphoribosyltransferase family. PyrE subfamily. In terms of assembly, homodimer. The cofactor is Mg(2+).

It catalyses the reaction orotidine 5'-phosphate + diphosphate = orotate + 5-phospho-alpha-D-ribose 1-diphosphate. It functions in the pathway pyrimidine metabolism; UMP biosynthesis via de novo pathway; UMP from orotate: step 1/2. In terms of biological role, catalyzes the transfer of a ribosyl phosphate group from 5-phosphoribose 1-diphosphate to orotate, leading to the formation of orotidine monophosphate (OMP). The chain is Orotate phosphoribosyltransferase from Thiobacillus denitrificans (strain ATCC 25259 / T1).